Reading from the N-terminus, the 408-residue chain is Imidazolonepropionase (408 aa).

Positions 74 and 76 each coordinate Fe(3+). Zn(2+)-binding residues include His74 and His76. 4-imidazolone-5-propanoate is bound by residues Arg83, Tyr146, and His179. Tyr146 is an N-formimidoyl-L-glutamate binding site. Residue His244 coordinates Fe(3+). Residue His244 coordinates Zn(2+). Gln247 is a 4-imidazolone-5-propanoate binding site. A Fe(3+)-binding site is contributed by Asp319. Asp319 is a Zn(2+) binding site. N-formimidoyl-L-glutamate is bound by residues Asn321 and Gly323. Position 324 (Thr324) interacts with 4-imidazolone-5-propanoate.

The protein belongs to the metallo-dependent hydrolases superfamily. HutI family. Requires Zn(2+) as cofactor. The cofactor is Fe(3+).

It is found in the cytoplasm. The catalysed reaction is 4-imidazolone-5-propanoate + H2O = N-formimidoyl-L-glutamate. Its pathway is amino-acid degradation; L-histidine degradation into L-glutamate; N-formimidoyl-L-glutamate from L-histidine: step 3/3. Catalyzes the hydrolytic cleavage of the carbon-nitrogen bond in imidazolone-5-propanoate to yield N-formimidoyl-L-glutamate. It is the third step in the universal histidine degradation pathway. The sequence is that of Imidazolonepropionase from Ralstonia nicotianae (strain ATCC BAA-1114 / GMI1000) (Ralstonia solanacearum).